Here is a 204-residue protein sequence, read N- to C-terminus: UPF0637 protein LMHCC_1566 (204 aa).

It belongs to the UPF0637 family.

This chain is UPF0637 protein LMHCC_1566, found in Listeria monocytogenes serotype 4a (strain HCC23).